The chain runs to 311 residues: Putative mitochondrial transporter UCP3 (311 aa).

At methionine 1–proline 10 the chain is on the mitochondrial intermembrane side. A helical membrane pass occupies residues proline 11–phenylalanine 32. Solcar repeat units lie at residues proline 11–phenylalanine 105, serine 114–lysine 205, and aspartate 214–alanine 299. Residues proline 33 to serine 76 lie on the Mitochondrial matrix side of the membrane. Residues leucine 77–tyrosine 99 form a helical membrane-spanning segment. The Mitochondrial intermembrane portion of the chain corresponds to aspartate 100–arginine 119. Residues isoleucine 120–proline 136 form a helical membrane-spanning segment. Residues threonine 137–leucine 182 lie on the Mitochondrial matrix side of the membrane. Residues proline 183–tyrosine 199 form a helical membrane-spanning segment. Residues aspartate 200 to phenylalanine 216 lie on the Mitochondrial intermembrane side of the membrane. A helical transmembrane segment spans residues proline 217 to proline 236. Residues valine 237 to alanine 270 are Mitochondrial matrix-facing. A helical transmembrane segment spans residues phenylalanine 271–tyrosine 293. Residues serine 278 to leucine 300 form a purine nucleotide binding region. Topologically, residues glutamate 294–phenylalanine 311 are mitochondrial intermembrane.

The protein belongs to the mitochondrial carrier (TC 2.A.29) family. In terms of assembly, interacts with HAX1; the interaction is direct and calcium-dependent.

The protein localises to the mitochondrion inner membrane. In terms of biological role, putative transmembrane transporter that plays a role in mitochondrial metabolism via an as yet unclear mechanism. Originally, this mitochondrial protein was thought to act as a proton transmembrane transporter from the mitochondrial intermembrane space into the matrix, causing proton leaks through the inner mitochondrial membrane, thereby uncoupling mitochondrial membrane potential generation from ATP synthesis. However, this function is controversial and uncoupling may not be the function, or at least not the main function, but rather a consequence of more conventional metabolite transporter activity. In Bos taurus (Bovine), this protein is Putative mitochondrial transporter UCP3.